The chain runs to 689 residues: Glycine--tRNA ligase beta subunit (689 aa).

The protein belongs to the class-II aminoacyl-tRNA synthetase family. Tetramer of two alpha and two beta subunits.

Its subcellular location is the cytoplasm. It catalyses the reaction tRNA(Gly) + glycine + ATP = glycyl-tRNA(Gly) + AMP + diphosphate. This chain is Glycine--tRNA ligase beta subunit, found in Salmonella arizonae (strain ATCC BAA-731 / CDC346-86 / RSK2980).